Consider the following 490-residue polypeptide: Protein OrfX3 (490 aa).

Belongs to the TULIP P47 family. In terms of assembly, part of a crude toxin extract that includes BoNTA2/NTNH, P47, OrfX2 and OrfX3; OrfX1 was not detected. Post-translationally, shorter forms of this protein are seen in vivo.

Part of a botulinum neurotoxin type A2 (BoNT) locus; may be part of a progenitor toxin complex required to protect BoNT during its passage through the host gastrointestinal tract. The chain is Protein OrfX3 (orfX3) from Clostridium botulinum (strain Kyoto / Type A2).